The following is a 385-amino-acid chain: Cytochrome b (385 aa).

Residues 1–27 lie on the Mitochondrial matrix side of the membrane; it reads MAFRKSNVYLSLVNSYIIDSPQPSSIN. Tyr16 is a binding site for a ubiquinone. Residues 28 to 51 traverse the membrane as a helical segment; sequence YWWNMGSLLGLCLVIQIVTGIFMA. Over 52–74 the chain is Mitochondrial intermembrane; the sequence is MHYSSNIELAFSSVEHIMRDVHN. The chain crosses the membrane as a helical span at residues 75 to 102; that stretch reads GYILRYLHANGASFFFMVMFMHMAKGLY. Residues His82 and His96 each coordinate heme b. The Mitochondrial matrix portion of the chain corresponds to 103 to 110; that stretch reads YGSYRSPR. The chain crosses the membrane as a helical span at residues 111–135; that stretch reads VTLWNVGVIIFILTIATAFLGYCCV. Over 136–172 the chain is Mitochondrial intermembrane; that stretch reads YGQMSHWGATVITNLFSAIPFVGNDIVSWLWGGFSVS. The chain crosses the membrane as a helical span at residues 173 to 204; the sequence is NPTIQRFFALHYLVPFIIAAMVIMHLMALHIH. Heme b contacts are provided by His183 and His197. An a ubiquinone-binding site is contributed by His202. Over 205–223 the chain is Mitochondrial matrix; sequence GSSNPLGITGNLDRIPMHS. A helical membrane pass occupies residues 224–246; it reads YFIFKDLVTVFLFMLILALFVFY. The Mitochondrial intermembrane segment spans residues 247 to 287; that stretch reads SPNTLGHPDNYIPGNPLVTPASIVPEWYLLPFYAILRSIPD. A helical membrane pass occupies residues 288–308; that stretch reads KLLGVITMFAAILVLLVLPFT. Topologically, residues 309–319 are mitochondrial matrix; that stretch reads DRSVVRGNTFK. The chain crosses the membrane as a helical span at residues 320-340; it reads VLSKFFFFIFVFNFVLLGQIG. Residues 341–347 lie on the Mitochondrial intermembrane side of the membrane; the sequence is ACHVEVP. A helical membrane pass occupies residues 348 to 364; the sequence is YVLMGQIATFIYFAYFL. Residues 365–385 lie on the Mitochondrial matrix side of the membrane; it reads IIVPVISTIENVLFYIGRVNK.

It belongs to the cytochrome b family. In terms of assembly, component of the ubiquinol-cytochrome c oxidoreductase (cytochrome b-c1 complex, complex III, CIII), a multisubunit enzyme composed of 10 subunits. The complex is composed of 3 respiratory subunits cytochrome b (COB), cytochrome c1 (CYT1) and Rieske protein (RIP1), 2 core protein subunits COR1 and QCR2, and 5 low-molecular weight protein subunits QCR6, QCR7, QCR8, QCR9 and QCR10. The complex exists as an obligatory dimer and forms supercomplexes (SCs) in the inner mitochondrial membrane with a monomer or a dimer of cytochrome c oxidase (complex IV, CIV), resulting in 2 different assemblies (supercomplexes III(2)IV and III(2)IV(2)). It depends on heme b as a cofactor.

It localises to the mitochondrion inner membrane. The enzyme catalyses a quinol + 2 Fe(III)-[cytochrome c](out) = a quinone + 2 Fe(II)-[cytochrome c](out) + 2 H(+)(out). In terms of biological role, component of the ubiquinol-cytochrome c oxidoreductase, a multisubunit transmembrane complex that is part of the mitochondrial electron transport chain which drives oxidative phosphorylation. The respiratory chain contains 3 multisubunit complexes succinate dehydrogenase (complex II, CII), ubiquinol-cytochrome c oxidoreductase (cytochrome b-c1 complex, complex III, CIII) and cytochrome c oxidase (complex IV, CIV), that cooperate to transfer electrons derived from NADH and succinate to molecular oxygen, creating an electrochemical gradient over the inner membrane that drives transmembrane transport and the ATP synthase. The cytochrome b-c1 complex catalyzes electron transfer from ubiquinol to cytochrome c, linking this redox reaction to translocation of protons across the mitochondrial inner membrane, with protons being carried across the membrane as hydrogens on the quinol. In the process called Q cycle, 2 protons are consumed from the matrix, 4 protons are released into the intermembrane space and 2 electrons are passed to cytochrome c. Cytochrome b is a catalytic core subunit containing 2 b-type hemes BL and BH topographically segregated in the quinone reduction (Qi) and quinol oxidation (Q0) sites on opposite sides of the membrane. The polypeptide is Cytochrome b (COB) (Saccharomyces cerevisiae (strain ATCC 204508 / S288c) (Baker's yeast)).